A 297-amino-acid polypeptide reads, in one-letter code: 4-hydroxy-tetrahydrodipicolinate synthase (297 aa).

Pyruvate is bound at residue threonine 55. The active-site Proton donor/acceptor is tyrosine 144. Residue lysine 172 is the Schiff-base intermediate with substrate of the active site. Isoleucine 213 contributes to the pyruvate binding site.

It belongs to the DapA family. In terms of assembly, homotetramer; dimer of dimers.

It localises to the cytoplasm. It catalyses the reaction L-aspartate 4-semialdehyde + pyruvate = (2S,4S)-4-hydroxy-2,3,4,5-tetrahydrodipicolinate + H2O + H(+). It participates in amino-acid biosynthesis; L-lysine biosynthesis via DAP pathway; (S)-tetrahydrodipicolinate from L-aspartate: step 3/4. Catalyzes the condensation of (S)-aspartate-beta-semialdehyde [(S)-ASA] and pyruvate to 4-hydroxy-tetrahydrodipicolinate (HTPA). The polypeptide is 4-hydroxy-tetrahydrodipicolinate synthase (Lactococcus lactis subsp. lactis (strain IL1403) (Streptococcus lactis)).